Here is a 232-residue protein sequence, read N- to C-terminus: Large ribosomal subunit protein uL1 (232 aa).

Belongs to the universal ribosomal protein uL1 family. Part of the 50S ribosomal subunit.

In terms of biological role, binds directly to 23S rRNA. The L1 stalk is quite mobile in the ribosome, and is involved in E site tRNA release. Its function is as follows. Protein L1 is also a translational repressor protein, it controls the translation of the L11 operon by binding to its mRNA. This chain is Large ribosomal subunit protein uL1, found in Mesorhizobium japonicum (strain LMG 29417 / CECT 9101 / MAFF 303099) (Mesorhizobium loti (strain MAFF 303099)).